A 208-amino-acid polypeptide reads, in one-letter code: Peptidyl-prolyl cis-trans isomerase FKBP13, chloroplastic (208 aa).

2 disulfide bridges follow: Cys84–Cys96 and Cys185–Cys190. One can recognise a PPIase FKBP-type domain in the interval 109-208 (GQLIKAHYVG…LFDIEYIGKA (100 aa)).

It belongs to the FKBP-type PPIase family. In terms of assembly, interacts in vitro with LTO1. The precursor, but not the mature form of the protein, interacts with the Rieske protein. In terms of tissue distribution, expressed in stems, leaves and developing flower buds, but not in roots.

The protein resides in the plastid. It is found in the chloroplast thylakoid lumen. It catalyses the reaction [protein]-peptidylproline (omega=180) = [protein]-peptidylproline (omega=0). With respect to regulation, PPIase activity is optimal in oxidized form (S-S) and minimal in reduced form (SH). Reduction of the oxidized form is mediated by thioredoxin (TRX-M). In terms of biological role, PPIases accelerate the folding of proteins. It catalyzes the cis-trans isomerization of proline imidic peptide bonds in oligopeptides. Responsive of the major PPIase activity in the chloroplast thylakoid lumen. Regulates the accumulation of Rieske protein, an essential component of the photosynthetic electron transport chain. The sequence is that of Peptidyl-prolyl cis-trans isomerase FKBP13, chloroplastic from Arabidopsis thaliana (Mouse-ear cress).